Reading from the N-terminus, the 273-residue chain is Methylthioribulose-1-phosphate dehydratase (273 aa).

The disordered stretch occupies residues 1 to 27 (MCPTCPPSAASASSENNNTDNNDHLVL). Cys-114 provides a ligand contact to substrate. Positions 132 and 134 each coordinate Zn(2+). The Proton donor/acceptor role is filled by Glu-168. His-225 provides a ligand contact to Zn(2+).

This sequence belongs to the aldolase class II family. MtnB subfamily. Zn(2+) serves as cofactor.

The protein resides in the cytoplasm. It carries out the reaction 5-(methylsulfanyl)-D-ribulose 1-phosphate = 5-methylsulfanyl-2,3-dioxopentyl phosphate + H2O. It functions in the pathway amino-acid biosynthesis; L-methionine biosynthesis via salvage pathway; L-methionine from S-methyl-5-thio-alpha-D-ribose 1-phosphate: step 2/6. In terms of biological role, catalyzes the dehydration of methylthioribulose-1-phosphate (MTRu-1-P) into 2,3-diketo-5-methylthiopentyl-1-phosphate (DK-MTP-1-P). The sequence is that of Methylthioribulose-1-phosphate dehydratase from Sordaria macrospora (strain ATCC MYA-333 / DSM 997 / K(L3346) / K-hell).